The chain runs to 452 residues: Probable glycine dehydrogenase (decarboxylating) subunit 1 (452 aa).

The protein belongs to the GcvP family. N-terminal subunit subfamily. The glycine cleavage system is composed of four proteins: P, T, L and H. In this organism, the P 'protein' is a heterodimer of two subunits.

The enzyme catalyses N(6)-[(R)-lipoyl]-L-lysyl-[glycine-cleavage complex H protein] + glycine + H(+) = N(6)-[(R)-S(8)-aminomethyldihydrolipoyl]-L-lysyl-[glycine-cleavage complex H protein] + CO2. Its function is as follows. The glycine cleavage system catalyzes the degradation of glycine. The P protein binds the alpha-amino group of glycine through its pyridoxal phosphate cofactor; CO(2) is released and the remaining methylamine moiety is then transferred to the lipoamide cofactor of the H protein. This Nitrosospira multiformis (strain ATCC 25196 / NCIMB 11849 / C 71) protein is Probable glycine dehydrogenase (decarboxylating) subunit 1.